The sequence spans 452 residues: MNKVKIGEKYEVDITSMGHEGEGVGRIDGIAVFVKGALKGERVIVEIEEVHKNYLKGYTVKILEKSQHRVNPLCQYADRCGGCSLQHLSYKGQLEYKTQKVKDNLERIGKIYTKVHYAIGMENPLNYRNKGQFVVGEIGREKITGFYSFHSHEIVPVDNCLIQHPLSNKVVSVVKEWLNECDISVYDRKKGKGLIRHVVAKVAFKTGEVMAIIVINGEDIPCKEELIEALKEKVPGLKSVILNINTRRTKMILGNKNIVIYGKNTIEDFIKDLRFEISPLSFFQVNPIQTEILYDKAIEYAGLTGKEVVIDVYSGIGTISLFAAKKASFVYGIESVKEAVEDAEKNAQVNGVKNVKFIWGKAEREIAKLYKEGVKAEVVIVDPPRDGCDKEVIRAIVGINPKRIVYVSCNPSTLARDLRYLEDAGYRTVEVQPVDMFPYTYHVESVALVERM.

A TRAM domain is found at 3-61; the sequence is KVKIGEKYEVDITSMGHEGEGVGRIDGIAVFVKGALKGERVIVEIEEVHKNYLKGYTVK. [4Fe-4S] cluster-binding residues include cysteine 74, cysteine 80, cysteine 83, and cysteine 160. S-adenosyl-L-methionine contacts are provided by glutamine 284, tyrosine 313, glutamate 334, and aspartate 382. The active-site Nucleophile is the cysteine 409.

This sequence belongs to the class I-like SAM-binding methyltransferase superfamily. RNA M5U methyltransferase family.

This is an uncharacterized protein from Caldanaerobacter subterraneus subsp. tengcongensis (strain DSM 15242 / JCM 11007 / NBRC 100824 / MB4) (Thermoanaerobacter tengcongensis).